A 440-amino-acid polypeptide reads, in one-letter code: GTPase Der (440 aa).

EngA-type G domains follow at residues Ala-5 to Glu-167 and Ile-178 to Ser-353. GTP is bound by residues Gly-11–Ser-18, Asp-58–Ile-62, Asn-120–Glu-123, Gly-184–Ser-191, Asp-231–Leu-235, and Asn-296–Asp-299. The 85-residue stretch at Lys-354 to Gln-438 folds into the KH-like domain.

This sequence belongs to the TRAFAC class TrmE-Era-EngA-EngB-Septin-like GTPase superfamily. EngA (Der) GTPase family. In terms of assembly, associates with the 50S ribosomal subunit.

GTPase that plays an essential role in the late steps of ribosome biogenesis. The sequence is that of GTPase Der from Natranaerobius thermophilus (strain ATCC BAA-1301 / DSM 18059 / JW/NM-WN-LF).